The primary structure comprises 134 residues: Profilin-3 (134 aa).

Cys13 and Cys118 are disulfide-bonded. Positions 84 to 100 match the Involved in PIP2 interaction motif; that stretch reads AVIRGKKGSGGITIKKT. Thr114 bears the Phosphothreonine mark.

Belongs to the profilin family. As to quaternary structure, occurs in many kinds of cells as a complex with monomeric actin in a 1:1 ratio. Post-translationally, phosphorylated by MAP kinases.

Its subcellular location is the cytoplasm. The protein resides in the cytoskeleton. Its function is as follows. Binds to actin and affects the structure of the cytoskeleton. At high concentrations, profilin prevents the polymerization of actin, whereas it enhances it at low concentrations. The protein is Profilin-3 of Olea europaea (Common olive).